The chain runs to 396 residues: Orotidine 5'-phosphate decarboxylase (396 aa).

Substrate is bound by residues Asp-46, 68–70 (KTH), 103–112 (DRKFVDIGST), Tyr-346, and Arg-365. Lys-105 acts as the Proton donor in catalysis.

Belongs to the OMP decarboxylase family.

It carries out the reaction orotidine 5'-phosphate + H(+) = UMP + CO2. It participates in pyrimidine metabolism; UMP biosynthesis via de novo pathway; UMP from orotate: step 2/2. This Sordaria macrospora (strain ATCC MYA-333 / DSM 997 / K(L3346) / K-hell) protein is Orotidine 5'-phosphate decarboxylase (URA3).